Reading from the N-terminus, the 272-residue chain is Small ribosomal subunit protein uS2 (272 aa).

Positions 238-272 are disordered; that stretch reads ASKEEQTEEAEEETLSSKYREQDFQEAKSGARGEK. A compositionally biased stretch (basic and acidic residues) spans 255 to 272; that stretch reads KYREQDFQEAKSGARGEK.

The protein belongs to the universal ribosomal protein uS2 family.

The protein is Small ribosomal subunit protein uS2 of Protochlamydia amoebophila (strain UWE25).